Consider the following 126-residue polypeptide: Protein Wnt-1 (126 aa).

Ser1 carries O-palmitoleoyl serine; by PORCN lipidation. A disulfide bond links Cys92 and Cys107. Residues Asn93 and Asn123 are each glycosylated (N-linked (GlcNAc...) asparagine).

The protein belongs to the Wnt family. Post-translationally, palmitoleoylation is required for efficient binding to frizzled receptors. Palmitoleoylation is necessary for proper trafficking to cell surface. Depalmitoleoylated by NOTUM, leading to inhibit Wnt signaling pathway.

It localises to the secreted. The protein resides in the extracellular space. It is found in the extracellular matrix. In terms of biological role, ligand for members of the frizzled family of seven transmembrane receptors. Acts in the canonical Wnt signaling pathway by promoting beta-catenin-dependent transcriptional activation. Plays an essential role in the development of the embryonic brain and central nervous system (CNS). Has a role in osteoblast function, bone development and bone homeostasis. This chain is Protein Wnt-1 (WNT-1), found in Pituophis melanoleucus (Pine snake).